The sequence spans 864 residues: Translation initiation factor IF-2 (864 aa).

The segment covering 140–171 (DSRSLNTKKENKLKISNKDEQNKKFNQHRESN) has biased composition (basic and acidic residues). Residues 140–179 (DSRSLNTKKENKLKISNKDEQNKKFNQHRESNSFDLNHKK) form a disordered region. Positions 364 to 533 (IRAPVVTIMG…LLQAEMLELK (170 aa)) constitute a tr-type G domain. Positions 373-380 (GHVDHGKT) are G1. 373-380 (GHVDHGKT) provides a ligand contact to GTP. Residues 398–402 (GITQN) form a G2 region. The tract at residues 419–422 (DTPG) is G3. Residues 419–423 (DTPGH) and 473–476 (NKID) each bind GTP. Positions 473–476 (NKID) are G4. Positions 509–511 (SAK) are G5.

Belongs to the TRAFAC class translation factor GTPase superfamily. Classic translation factor GTPase family. IF-2 subfamily.

The protein localises to the cytoplasm. One of the essential components for the initiation of protein synthesis. Protects formylmethionyl-tRNA from spontaneous hydrolysis and promotes its binding to the 30S ribosomal subunits. Also involved in the hydrolysis of GTP during the formation of the 70S ribosomal complex. The protein is Translation initiation factor IF-2 of Buchnera aphidicola subsp. Acyrthosiphon pisum (strain 5A).